The sequence spans 486 residues: Betaine aldehyde dehydrogenase (486 aa).

Residues Thr23 and Asp90 each contribute to the K(+) site. Position 147–149 (147–149) interacts with NAD(+); that stretch reads GAW. Residue Lys159 is the Charge relay system of the active site. NAD(+)-binding positions include 173 to 176 and 226 to 229; these read KPSE and ESGT. A K(+)-binding site is contributed by Leu241. Glu247 functions as the Proton acceptor in the catalytic mechanism. NAD(+) contacts are provided by Gly249, Cys281, and Glu382. Cys281 functions as the Nucleophile in the catalytic mechanism. Position 281 is a cysteine sulfenic acid (-SOH) (Cys281). K(+)-binding residues include Lys452 and Gly455. Glu459 (charge relay system) is an active-site residue.

It belongs to the aldehyde dehydrogenase family. Dimer of dimers. K(+) serves as cofactor.

It carries out the reaction betaine aldehyde + NAD(+) + H2O = glycine betaine + NADH + 2 H(+). It functions in the pathway amine and polyamine biosynthesis; betaine biosynthesis via choline pathway; betaine from betaine aldehyde: step 1/1. Functionally, involved in the biosynthesis of the osmoprotectant glycine betaine. Catalyzes the irreversible oxidation of betaine aldehyde to the corresponding acid. In Vibrio vulnificus (strain YJ016), this protein is Betaine aldehyde dehydrogenase.